The chain runs to 295 residues: Ankyrin repeat and SOCS box protein 17 (295 aa).

The stretch at 146–176 is one ANK repeat; it reads SGITPLLYVAQTRQSNILKILLQYGILEREK. One can recognise an SOCS box domain in the interval 232–295; it reads LGRRPIISNW…RLQKYLNLES (64 aa).

Belongs to the ankyrin SOCS box (ASB) family.

It participates in protein modification; protein ubiquitination. Its function is as follows. May be a substrate-recognition component of a SCF-like ECS (Elongin-Cullin-SOCS-box protein) E3 ubiquitin-protein ligase complex which mediates the ubiquitination and subsequent proteasomal degradation of target proteins. This Canis lupus familiaris (Dog) protein is Ankyrin repeat and SOCS box protein 17 (ASB17).